A 128-amino-acid polypeptide reads, in one-letter code: Large ribosomal subunit protein bL17 (128 aa).

This sequence belongs to the bacterial ribosomal protein bL17 family. In terms of assembly, part of the 50S ribosomal subunit. Contacts protein L32.

This chain is Large ribosomal subunit protein bL17, found in Streptococcus sanguinis (strain SK36).